We begin with the raw amino-acid sequence, 212 residues long: Phosphoribosylglycinamide formyltransferase (212 aa).

11-13 lines the N(1)-(5-phospho-beta-D-ribosyl)glycinamide pocket; the sequence is GSN. (6R)-10-formyltetrahydrofolate is bound by residues Arg64, 89 to 92, and Asn106; that span reads MRIL. The Proton donor role is filled by His108. Residue 140 to 144 participates in (6R)-10-formyltetrahydrofolate binding; the sequence is TDELD. 170–173 provides a ligand contact to N(1)-(5-phospho-beta-D-ribosyl)glycinamide; sequence QTQE.

Belongs to the GART family. In terms of assembly, monomer. Homodimer below pH 6.8.

The enzyme catalyses N(1)-(5-phospho-beta-D-ribosyl)glycinamide + (6R)-10-formyltetrahydrofolate = N(2)-formyl-N(1)-(5-phospho-beta-D-ribosyl)glycinamide + (6S)-5,6,7,8-tetrahydrofolate + H(+). Its pathway is purine metabolism; IMP biosynthesis via de novo pathway; N(2)-formyl-N(1)-(5-phospho-D-ribosyl)glycinamide from N(1)-(5-phospho-D-ribosyl)glycinamide (10-formyl THF route): step 1/1. Inhibited by N10-(bromoacetyl)-5,8-dideazafolate. Functionally, catalyzes the transfer of a formyl group from 10-formyltetrahydrofolate to 5-phospho-ribosyl-glycinamide (GAR), producing 5-phospho-ribosyl-N-formylglycinamide (FGAR) and tetrahydrofolate. This Escherichia coli (strain K12) protein is Phosphoribosylglycinamide formyltransferase.